We begin with the raw amino-acid sequence, 338 residues long: uncharacterized protein (338 aa).

A helical membrane pass occupies residues Ile20–Leu40.

Its subcellular location is the membrane. This is an uncharacterized protein from Schizosaccharomyces pombe (strain 972 / ATCC 24843) (Fission yeast).